We begin with the raw amino-acid sequence, 233 residues long: Leucyl/phenylalanyl-tRNA--protein transferase (233 aa).

This sequence belongs to the L/F-transferase family.

The protein localises to the cytoplasm. It carries out the reaction N-terminal L-lysyl-[protein] + L-leucyl-tRNA(Leu) = N-terminal L-leucyl-L-lysyl-[protein] + tRNA(Leu) + H(+). The enzyme catalyses N-terminal L-arginyl-[protein] + L-leucyl-tRNA(Leu) = N-terminal L-leucyl-L-arginyl-[protein] + tRNA(Leu) + H(+). It catalyses the reaction L-phenylalanyl-tRNA(Phe) + an N-terminal L-alpha-aminoacyl-[protein] = an N-terminal L-phenylalanyl-L-alpha-aminoacyl-[protein] + tRNA(Phe). In terms of biological role, functions in the N-end rule pathway of protein degradation where it conjugates Leu, Phe and, less efficiently, Met from aminoacyl-tRNAs to the N-termini of proteins containing an N-terminal arginine or lysine. The protein is Leucyl/phenylalanyl-tRNA--protein transferase of Chromobacterium violaceum (strain ATCC 12472 / DSM 30191 / JCM 1249 / CCUG 213 / NBRC 12614 / NCIMB 9131 / NCTC 9757 / MK).